Here is a 472-residue protein sequence, read N- to C-terminus: Chromosomal replication initiator protein DnaA (472 aa).

Residues 1-73 form a domain I, interacts with DnaA modulators region; sequence MSNMEQDRWS…LSCWQAELPE (73 aa). Residues 73-128 form a domain II region; sequence EVNRVDLTVRSPVRCATPAKEVPAPVESRRDEQRPSAERSNGATPVSANHDALGGS. Residues 90–124 are disordered; that stretch reads PAKEVPAPVESRRDEQRPSAERSNGATPVSANHDA. The span at 99–109 shows a compositional bias: basic and acidic residues; the sequence is ESRRDEQRPSA. Residues 110 to 119 show a composition bias toward polar residues; that stretch reads ERSNGATPVS. The tract at residues 129–351 is domain III, AAA+ region; it reads PLDPRLTFAS…GAINRLLAHS (223 aa). Positions 176, 178, 179, and 180 each coordinate ATP. The tract at residues 352-472 is domain IV, binds dsDNA; the sequence is KLNNQPVTLE…VESLKRQLQE (121 aa).

It belongs to the DnaA family. As to quaternary structure, oligomerizes as a right-handed, spiral filament on DNA at oriC.

The protein localises to the cytoplasm. Functionally, plays an essential role in the initiation and regulation of chromosomal replication. ATP-DnaA binds to the origin of replication (oriC) to initiate formation of the DNA replication initiation complex once per cell cycle. Binds the DnaA box (a 9 base pair repeat at the origin) and separates the double-stranded (ds)DNA. Forms a right-handed helical filament on oriC DNA; dsDNA binds to the exterior of the filament while single-stranded (ss)DNA is stabiized in the filament's interior. The ATP-DnaA-oriC complex binds and stabilizes one strand of the AT-rich DNA unwinding element (DUE), permitting loading of DNA polymerase. After initiation quickly degrades to an ADP-DnaA complex that is not apt for DNA replication. Binds acidic phospholipids. The protein is Chromosomal replication initiator protein DnaA of Rhodopseudomonas palustris (strain ATCC BAA-98 / CGA009).